Here is a 490-residue protein sequence, read N- to C-terminus: MEPLGSTLTATYAHPQPAATNFLPAIGTLTSSYRNRFPHRNLTHSLSLPWRPSTYYKTAYNYPTLAPLSSTSQSVCESTMLPFVSNRTTLFTRYTPDDWYRSTLVGFQESNCSRHNSERLRVDTSRLIQDKYQQIRKTQADSTQNLGERVNDIAFWKSEIIHELDEMIGETNALTDIKRRLERGLIETDAPLQVARECLFHREKRMGIDLVHDEAEKELLTEVETVLCCQERMRRHLDKAIAQLASDRSAQHELEKDLSDKQAALRIDDKCKHLRNTSQGVSYFRGVENVDATVSVPESWAKFTDDNVLRSQSERAASAKLREDTENLLIVIANEMWNQFNKVNVAFTNRIAETVDAKNKIHIHLSKTLQEIFQTEMAIESIRKAIKEKSAFLKVAQTRLDERTRRPNIELCRDIAQLRLVNEVYEVDETIQTLQQRLRDSEDTLQSLAHTKATLEHDLAVKANTLYIDQEKCMSMRNSYPSTLRLVGFC.

O-linked (GalNAc...) threonine glycosylation is found at Thr-7 and Thr-9. 4 N-linked (GlcNAc...) asparagine glycosylation sites follow: Asn-41, Asn-86, Asn-111, and Asn-276. Residues 419–456 are a coiled coil; the sequence is RLVNEVYEVDETIQTLQQRLRDSEDTLQSLAHTKATLE.

This sequence belongs to the tektin family. As to quaternary structure, microtubule inner protein component of sperm flagellar doublet microtubules. Interacts with TEKT1, TEKT2, TEKT4 and TEKT5. Interacts with CCDC38. N- and O-glycosylated. Post-translationally, may be proteolytically processed during the epididymal transit of spermatozoa. In terms of processing, ubiquitinated, leading to its degradation. Deubiquitinated by USP16, promoting its stability. In terms of tissue distribution, expressed in epididymal sperm (at protein level).

The protein resides in the cytoplasm. It localises to the cytoskeleton. Its subcellular location is the cilium axoneme. The protein localises to the flagellum axoneme. It is found in the cytoplasmic vesicle. The protein resides in the secretory vesicle. It localises to the acrosome outer membrane. In terms of biological role, microtubule inner protein (MIP) part of the dynein-decorated doublet microtubules (DMTs) in cilia and flagellar axoneme. Forms filamentous polymers in the walls of ciliary and flagellar microtubules. Required for normal sperm mobility. This Rattus norvegicus (Rat) protein is Tektin-3 (Tekt3).